Consider the following 92-residue polypeptide: MNKTELIAKVAEKQGVSKKEGAPSVEKVFDTISEALKSGEKVSIPGFGTFEVRERAARKGRNPQTGEEIDIPATKAPAFKPAKALKDAVKAK.

Phosphothreonine is present on Thr4. The segment at 55–77 is disordered; the sequence is RAARKGRNPQTGEEIDIPATKAP.

It belongs to the bacterial histone-like protein family. In terms of assembly, homodimer.

In terms of biological role, histone-like DNA-binding protein which is capable of wrapping DNA to stabilize it, and thus to prevent its denaturation under extreme environmental conditions. This Bacillus subtilis (strain 168) protein is SPbeta prophage-derived DNA-binding protein HU 2 (hup2).